A 145-amino-acid polypeptide reads, in one-letter code: uncharacterized protein (145 aa).

Residues 63 to 83 (FLCLPLFLSFLVANLILWLSF) traverse the membrane as a helical segment.

The protein localises to the mitochondrion membrane. This is an uncharacterized protein from Arabidopsis thaliana (Mouse-ear cress).